An 807-amino-acid polypeptide reads, in one-letter code: Centrosomal protein of 97 kDa (807 aa).

7 LRR repeats span residues 34–55, 56–77, 78–99, 100–121, 122–143, 144–165, and 168–189; these read DTQT…EKCR, NLVQ…AKLI, HLRV…KDLV, HLEW…NSST, SLQH…SKLK, SLKT…SACL, and SLTI…AFLA. Residues 208–246 enclose the LRRCT domain; sequence TPSIPGFDYRPFIVSWCLNLKVLDGYVVSQKESLKAEWL. The disordered stretch occupies residues 306–330; that stretch reads RSDGYLTSSTPNKRLPLSTEHHSPT. An IQ domain is found at 519 to 548; the sequence is ISKAATKLQSCWRGFYARKYNPKVKDVCYE. A compositionally biased stretch (polar residues) spans 607–623; the sequence is TANSSENDLPSASNSKH. Residues 607–756 form a disordered region; it reads TANSSENDLP…RPEITTCSDN (150 aa). Residues 681–690 show a composition bias toward basic and acidic residues; the sequence is TGRHYNDKVP. Residues 704–724 are compositionally biased toward polar residues; that stretch reads SQSSKDSFTSEQDSSLLQQYL.

It localises to the cytoplasm. It is found in the cytoskeleton. The protein localises to the microtubule organizing center. The protein resides in the centrosome. Functionally, acts as a key negative regulator of ciliogenesis in collaboration with ccp110 by capping the mother centriole thereby preventing cilia formation. Required for recruitment of ccp110 to the centrosome. The polypeptide is Centrosomal protein of 97 kDa (cep97) (Xenopus laevis (African clawed frog)).